A 953-amino-acid polypeptide reads, in one-letter code: MEESSSVAMLLPDIGEQEAILTAESIISPSLEIDEQRKTKPDPLIHVIQKLSKIVENEKSQKCPLIGKKRPHSSAATHSLETQELCEIPAKVTQSPAAVTRRAEMSQTNFTPDTLAQNEGKAMSYQCSLCKFLSSSFSVLKDHIKQHGQQNEVILMCSECHITSRSQEELEAHVVNDHDNDANIHTQSKAQQCVSPSSSLCRKTTERNETVPDIPVSVDNLQTHTVQTASVAEMGRRKWYAYEQYGMYRCLFCSYTCGQQRMLKTHAWKHAGEVDCSYPIFENENEPLGLLDSSAAAAPGGVDAVVIAIGDSELSIHNGPSVQVQICSSEQLSSSSPLEQSAERGVHLSQSVTLDPNEEEMLEVISDAEENLIPDSLLTSAQKIISSSPNKKGHVNVIVERLPSAEETLSQKRFLMNTEMEEGKDLSPTEAQIGREGTDDVYRADKCTVDIGGLIIGWSSSEKKDELMNKGLATDENAPPGRRRTNSESLRLHSLAAEALVTMPIRAAELTRANLGHYGDINLLGPDTSQRQVDSTLAAYSKMMSPLKNSSDGLTSLNQSNSTLVALPEGRQELSDGQVKTGISMSLLTVIEKLRERTDQNASDDDILKELQDNAQCQPNSDTSLSGNNVVEYIPNAERPYRCRLCHYTSGNKGYIKQHLRVHRQRQPYQCPICEHIADNSKDLESHMIHHCKTRIYQCKQCEESFHYKSQLRNHEREQHSLPDTLSIATSNEPRISSDTADGKCVQEGNKSSVQKQYRCDVCDYTSTTYVGVRNHRRIHNSDKPYRCSLCGYVCSHPPSLKSHMWKHASDQNYNYEQVNKAINDAISQSGRVLGKTPGKTQLKSSEDSADPITGSSENAVSSSELMSQTPSEVLGTNENEKLSPTSNTSYSLEKISSLAPPSMEYCVLLFCCCICGFESTSKENLLDHMKEHEGEIVNIILNKDHNTALNTN.

S95 bears the Phosphoserine mark. C2H2-type zinc fingers lie at residues 125-147 (YQCS…IKQH), 155-185 (LMCS…ANIH), and 248-270 (YRCL…AWKH). A Phosphoserine modification is found at S427. The tract at residues 470–489 (KGLATDENAPPGRRRTNSES) is disordered. C2H2-type zinc fingers lie at residues 641 to 663 (YRCR…LRVH), 669 to 691 (YQCP…MIHH), 697 to 720 (YQCK…REQH), 758 to 780 (YRCD…RRIH), and 786 to 808 (YRCS…MWKH). Residues 831 to 891 (GRVLGKTPGK…KLSPTSNTSY (61 aa)) are disordered. A compositionally biased stretch (polar residues) spans 854–891 (TGSSENAVSSSELMSQTPSEVLGTNENEKLSPTSNTSY). The C2H2-type 9 zinc finger occupies 911 to 933 (FCCCICGFESTSKENLLDHMKEH).

The protein belongs to the krueppel C2H2-type zinc-finger protein family.

Its subcellular location is the nucleus. Functionally, may be involved in transcriptional regulation. The polypeptide is Zinc finger protein 507 (ZNF507) (Pongo abelii (Sumatran orangutan)).